Consider the following 192-residue polypeptide: MTIKNKGLIIILSSPSGTGKSSLAKALLKIDNNLRLSISATTRKPRLGEVEGINYYFKTKLEFEELVKQNKFLEYAKIYDNYYGTPKEYVEMLLNQGLDVLFDIDWQGAKSIKKNATNVVAIFILPPSIEILEQRLRNRATDNEEAIKLRMQSAQNEMSHANEYDYVITNDDFDQTLKKIHEIIVAEREKAF.

The Guanylate kinase-like domain occupies 7–185; the sequence is GLIIILSSPS…TLKKIHEIIV (179 aa). 14-21 is a binding site for ATP; it reads SPSGTGKS.

The protein belongs to the guanylate kinase family.

Its subcellular location is the cytoplasm. It catalyses the reaction GMP + ATP = GDP + ADP. Its function is as follows. Essential for recycling GMP and indirectly, cGMP. This chain is Guanylate kinase, found in Rickettsia felis (strain ATCC VR-1525 / URRWXCal2) (Rickettsia azadi).